Consider the following 119-residue polypeptide: Beta-2-microglobulin (119 aa).

The N-terminal stretch at 1 to 20 is a signal peptide; sequence MASSVVVALLVLLSLSGLEA. An Ig-like C1-type domain is found at 25–114; it reads PKIQVYSRHP…VTFSTPKTVK (90 aa). Cysteine 45 and cysteine 100 are oxidised to a cystine.

It belongs to the beta-2-microglobulin family. As to quaternary structure, heterodimer of an alpha chain and a beta chain. Beta-2-microglobulin is the beta-chain of major histocompatibility complex class I molecules.

It is found in the secreted. In terms of biological role, component of the class I major histocompatibility complex (MHC). Involved in the presentation of peptide antigens to the immune system. This Callithrix aurita (White-eared marmoset) protein is Beta-2-microglobulin (B2M).